The chain runs to 431 residues: Adenylosuccinate synthetase (431 aa).

GTP contacts are provided by residues Gly-13 to Lys-19 and Gly-41 to Thr-43. Catalysis depends on Asp-14, which acts as the Proton acceptor. The Mg(2+) site is built by Asp-14 and Gly-41. IMP-binding positions include Asp-14–Lys-17, Asn-39–His-42, Thr-130, Arg-144, Gln-225, Thr-240, and Arg-304. Catalysis depends on His-42, which acts as the Proton donor. Ser-300–Arg-306 is a binding site for substrate. GTP-binding positions include Arg-306, Lys-332–Asp-334, and Ser-414–Gly-416.

The protein belongs to the adenylosuccinate synthetase family. In terms of assembly, homodimer. Mg(2+) is required as a cofactor.

Its subcellular location is the cytoplasm. It catalyses the reaction IMP + L-aspartate + GTP = N(6)-(1,2-dicarboxyethyl)-AMP + GDP + phosphate + 2 H(+). It functions in the pathway purine metabolism; AMP biosynthesis via de novo pathway; AMP from IMP: step 1/2. Plays an important role in the de novo pathway of purine nucleotide biosynthesis. Catalyzes the first committed step in the biosynthesis of AMP from IMP. The protein is Adenylosuccinate synthetase of Bordetella avium (strain 197N).